The following is a 478-amino-acid chain: 3-isopropylmalate dehydratase large subunit (478 aa).

[4Fe-4S] cluster contacts are provided by Cys359, Cys420, and Cys423.

This sequence belongs to the aconitase/IPM isomerase family. LeuC type 1 subfamily. As to quaternary structure, heterodimer of LeuC and LeuD. It depends on [4Fe-4S] cluster as a cofactor.

The catalysed reaction is (2R,3S)-3-isopropylmalate = (2S)-2-isopropylmalate. It functions in the pathway amino-acid biosynthesis; L-leucine biosynthesis; L-leucine from 3-methyl-2-oxobutanoate: step 2/4. In terms of biological role, catalyzes the isomerization between 2-isopropylmalate and 3-isopropylmalate, via the formation of 2-isopropylmaleate. This is 3-isopropylmalate dehydratase large subunit from Psychrobacter sp. (strain PRwf-1).